The primary structure comprises 349 residues: Cell adhesion molecule CEACAM8 (349 aa).

An N-terminal signal peptide occupies residues 1–34; that stretch reads MGPISAPSCRWRIPWQGLLLTASLFTFWNPPTTA. The Ig-like V-type domain occupies 35 to 142; it reads QLTIEAVPSN…EVTGQFSVHP (108 aa). Asn104, Asn111, Asn115, Asn152, Asn173, Asn197, Asn224, Asn256, Asn274, Asn288, and Asn309 each carry an N-linked (GlcNAc...) asparagine glycan. Ig-like C2-type domains follow at residues 145–232 and 237–319; these read PKPS…VTLN and PDAP…ITVS. Cys167 and Cys215 form a disulfide bridge. The cysteines at positions 259 and 299 are disulfide-linked. Asp320 is lipidated: GPI-anchor amidated aspartate. Positions 321 to 349 are cleaved as a propeptide — removed in mature form; that stretch reads ALVQGSSPGLSARATVSIMIGVLARVALI.

The protein belongs to the immunoglobulin superfamily. CEA family. As to quaternary structure, monomer. Heterodimer with CEACAM6; heterodimerizes via its Ig-like V-type domain. Glycosylated. As to expression, expressed in leukocytes of chronic myeloid Leukemia patients and bone marrow.

The protein localises to the cell membrane. It localises to the cell surface. Functionally, cell surface glycoprotein that plays a role in cell adhesion in a calcium-independent manner. Mediates heterophilic cell adhesion with other carcinoembryonic antigen-related cell adhesion molecules, such as CEACAM6. Heterophilic interaction with CEACAM8 occurs in activated neutrophils. The protein is Cell adhesion molecule CEACAM8 of Homo sapiens (Human).